The primary structure comprises 165 residues: NAD(P)H-quinone oxidoreductase subunit I, chloroplastic (165 aa).

4Fe-4S ferredoxin-type domains follow at residues 55-84 (GRIH…VDWE) and 95-124 (KSYS…MTEE). Positions 64, 67, 70, 74, 104, 107, 110, and 114 each coordinate [4Fe-4S] cluster.

It belongs to the complex I 23 kDa subunit family. In terms of assembly, NDH is composed of at least 16 different subunits, 5 of which are encoded in the nucleus. It depends on [4Fe-4S] cluster as a cofactor.

Its subcellular location is the plastid. The protein localises to the chloroplast thylakoid membrane. The enzyme catalyses a plastoquinone + NADH + (n+1) H(+)(in) = a plastoquinol + NAD(+) + n H(+)(out). It carries out the reaction a plastoquinone + NADPH + (n+1) H(+)(in) = a plastoquinol + NADP(+) + n H(+)(out). Its function is as follows. NDH shuttles electrons from NAD(P)H:plastoquinone, via FMN and iron-sulfur (Fe-S) centers, to quinones in the photosynthetic chain and possibly in a chloroplast respiratory chain. The immediate electron acceptor for the enzyme in this species is believed to be plastoquinone. Couples the redox reaction to proton translocation, and thus conserves the redox energy in a proton gradient. The protein is NAD(P)H-quinone oxidoreductase subunit I, chloroplastic of Psilotum nudum (Whisk fern).